Here is a 379-residue protein sequence, read N- to C-terminus: Chaperone protein DnaJ (379 aa).

The 66-residue stretch at 5–70 folds into the J domain; sequence DYYEILEVSR…EKRAAYDRYG (66 aa). The CR-type zinc finger occupies 135–213; that stretch reads GIKVPISYVT…CGGSGRVRNE (79 aa). 8 residues coordinate Zn(2+): Cys-148, Cys-151, Cys-165, Cys-168, Cys-187, Cys-190, Cys-201, and Cys-204. 4 CXXCXGXG motif repeats span residues 148–155, 165–172, 187–194, and 201–208; these read CSSCSGIG, CGNCNGAG, CNVCNGEG, and CRRCGGSG.

This sequence belongs to the DnaJ family. In terms of assembly, homodimer. It depends on Zn(2+) as a cofactor.

It is found in the cytoplasm. Functionally, participates actively in the response to hyperosmotic and heat shock by preventing the aggregation of stress-denatured proteins and by disaggregating proteins, also in an autonomous, DnaK-independent fashion. Unfolded proteins bind initially to DnaJ; upon interaction with the DnaJ-bound protein, DnaK hydrolyzes its bound ATP, resulting in the formation of a stable complex. GrpE releases ADP from DnaK; ATP binding to DnaK triggers the release of the substrate protein, thus completing the reaction cycle. Several rounds of ATP-dependent interactions between DnaJ, DnaK and GrpE are required for fully efficient folding. Also involved, together with DnaK and GrpE, in the DNA replication of plasmids through activation of initiation proteins. The chain is Chaperone protein DnaJ from Anaplasma marginale (strain Florida).